The primary structure comprises 586 residues: Protein BONZAI 2 (586 aa).

A lipid anchor (N-myristoyl glycine) is attached at Gly2. C2 domains follow at residues 25–164 (SAAT…ALEL) and 176–303 (PQHN…NLAL). The Ca(2+) site is built by Asp62, Asp68, Asp121, and Asp123. Positions 344–563 (NFMVAIDFTA…SVVEALLAEL (220 aa)) constitute a VWFA domain.

This sequence belongs to the copine family. Interacts with BAP1 and BAP2. Ca(2+) is required as a cofactor. In terms of tissue distribution, expressed in roots, leaves and stems. Expressed in young growing tissues.

The protein resides in the cell membrane. Its function is as follows. Negative regulator of cell death and defense responses. May repress a number of R genes and may have effects in promoting growth and development. May function in membrane trafficking and in fusion of vesicles with plasma membrane. In Arabidopsis thaliana (Mouse-ear cress), this protein is Protein BONZAI 2 (BON2).